The chain runs to 292 residues: Aquaporin-3 (292 aa).

Residues 1–24 (MGRQKELMNRCGEMLHIRYRLLRQ) lie on the Cytoplasmic side of the membrane. A helical membrane pass occupies residues 25–42 (ALAECLGTLILVMFGCGS). Over 43–56 (VAQVVLSRGTHGGF) the chain is Extracellular. A helical transmembrane segment spans residues 57-74 (LTINLAFGFAVTLAILVA). Over 75–78 (GQVS) the chain is Cytoplasmic. An intramembrane region (discontinuously helical) is located at residues 79–92 (GAHLNPAVTFAMCF). The NPA 1 motif lies at 83–85 (NPA). Over 93 to 100 (LAREPWIK) the chain is Cytoplasmic. Residues 101 to 121 (LPIYTLAQTLGAFLGAGIVFG) form a helical membrane-spanning segment. At 122 to 159 (LYYDAIWAFAGNELVVSGPNGTAGIFATYPSGHLDMVN) the chain is on the extracellular side. Asparagine 141 is a glycosylation site (N-linked (GlcNAc...) asparagine). A helical transmembrane segment spans residues 160–177 (GFFDQFIGTAALIVCVLA). Residues 178 to 189 (IVDPYNNPVPRG) are Cytoplasmic-facing. Residues 190–206 (LEAFTVGLVVLVIGTSM) traverse the membrane as a helical segment. Residues 207 to 210 (GFNS) lie on the Extracellular side of the membrane. Residues 211-224 (GYAVNPARDFGPRL) constitute an intramembrane region (discontinuously helical). Residues 215-217 (NPA) carry the NPA 2 motif. The Extracellular portion of the chain corresponds to 225 to 242 (FTALAGWGSEVFTTGQNW). Residues 243-264 (WWVPIVSPLLGSIGGVFVYQLM) traverse the membrane as a helical segment. Residues 265–292 (IGCHLEQPPPSTEAENVKLAHMKHKEQI) lie on the Cytoplasmic side of the membrane.

The protein belongs to the MIP/aquaporin (TC 1.A.8) family. As to quaternary structure, homotetramer; each monomer provides an independent glycerol/water pore. Could also exist in other oligomeric states. Detected in kidney medulla and papilla, in collecting duct cells. Detected in colon.

It is found in the cell membrane. It localises to the basolateral cell membrane. It catalyses the reaction glycerol(in) = glycerol(out). The catalysed reaction is H2O(in) = H2O(out). The enzyme catalyses urea(in) = urea(out). It carries out the reaction H2O2(out) = H2O2(in). With respect to regulation, channel activity is inhibited by mercury ions. In terms of biological role, aquaglyceroporins form homotetrameric transmembrane channels, with each monomer independently mediating glycerol and water transport across the plasma membrane along their osmotic gradient. Could also be permeable to urea. Also participates in cell permeability to H2O2 and H2O2-mediated signaling. In skin, transports glycerol to the epidermis and stratum corneum, where it maintains hydration, elasticity, and supports lipid biosynthesis for barrier repair. In kidney, contributes to the reabsorption of water, helping the body maintain proper fluid balance. The chain is Aquaporin-3 from Rattus norvegicus (Rat).